Reading from the N-terminus, the 120-residue chain is Large ribosomal subunit protein bL19 (120 aa).

It belongs to the bacterial ribosomal protein bL19 family.

Its function is as follows. This protein is located at the 30S-50S ribosomal subunit interface and may play a role in the structure and function of the aminoacyl-tRNA binding site. The sequence is that of Large ribosomal subunit protein bL19 from Chlorobium limicola (strain DSM 245 / NBRC 103803 / 6330).